A 105-amino-acid chain; its full sequence is 5,5'-dehydrodivanillate O-demethylase ferredoxin subunit (105 aa).

Positions 2–105 constitute a 2Fe-2S ferredoxin-type domain; it reads AQLKVVTRDG…GMTVTIAPED (104 aa). Residues cysteine 40, cysteine 46, cysteine 49, and cysteine 86 each coordinate [2Fe-2S] cluster.

It belongs to the adrenodoxin/putidaredoxin family. Monomer. The three-component monooxygenase is composed of an oxygenase (LigXa), a ferredoxin (LigXc) and a ferredoxin reductase (LigXd). [2Fe-2S] cluster is required as a cofactor.

It carries out the reaction 5,5'-dehydrodivanillate + NADH + O2 + H(+) = 2,2',3-trihydroxy-3'-methoxy-5,5'-dicarboxybiphenyl + formaldehyde + NAD(+) + H2O. Involved in the catabolism of 5,5'-dehydrodivanillate (DDVA), an intermediate in the biodegradation of lignin. Part of a three-component monooxygenase that catalyzes the O-demethylation of DDVA, leading to the formation of 2,2',3-trihydroxy-3'-methoxy-5,5'-dicarboxybiphenyl (OH-DDVA). LigXc probably functions as an intermediate electron transfer protein between LigXd and LigXa. This Sphingobium sp. (strain NBRC 103272 / SYK-6) protein is 5,5'-dehydrodivanillate O-demethylase ferredoxin subunit.